Reading from the N-terminus, the 357-residue chain is Cobalt-precorrin-5B C(1)-methyltransferase (357 aa).

The protein belongs to the CbiD family.

It catalyses the reaction Co-precorrin-5B + S-adenosyl-L-methionine = Co-precorrin-6A + S-adenosyl-L-homocysteine. Its pathway is cofactor biosynthesis; adenosylcobalamin biosynthesis; cob(II)yrinate a,c-diamide from sirohydrochlorin (anaerobic route): step 6/10. Functionally, catalyzes the methylation of C-1 in cobalt-precorrin-5B to form cobalt-precorrin-6A. This is Cobalt-precorrin-5B C(1)-methyltransferase from Rhodospirillum rubrum (strain ATCC 11170 / ATH 1.1.1 / DSM 467 / LMG 4362 / NCIMB 8255 / S1).